We begin with the raw amino-acid sequence, 565 residues long: Probable alpha-L-arabinofuranosidase A (565 aa).

The first 19 residues, 1–19 (MPLSAAIKSSLSVSVRADA), serve as a signal peptide directing secretion. N-linked (GlcNAc...) asparagine glycans are attached at residues Asn-71, Asn-91, Asn-128, Asn-303, Asn-362, Asn-486, and Asn-501.

It belongs to the glycosyl hydrolase 51 family.

Its subcellular location is the secreted. The enzyme catalyses Hydrolysis of terminal non-reducing alpha-L-arabinofuranoside residues in alpha-L-arabinosides.. The protein operates within glycan metabolism; L-arabinan degradation. Functionally, alpha-L-arabinofuranosidase involved in the degradation of arabinoxylan, a major component of plant hemicellulose. Acts only on small linear 1,5-alpha-linked L-arabinofuranosyl oligosaccharides. The chain is Probable alpha-L-arabinofuranosidase A (abfA) from Emericella nidulans (strain FGSC A4 / ATCC 38163 / CBS 112.46 / NRRL 194 / M139) (Aspergillus nidulans).